We begin with the raw amino-acid sequence, 199 residues long: Probable nicotinate-nucleotide adenylyltransferase (199 aa).

Belongs to the NadD family.

The enzyme catalyses nicotinate beta-D-ribonucleotide + ATP + H(+) = deamido-NAD(+) + diphosphate. It functions in the pathway cofactor biosynthesis; NAD(+) biosynthesis; deamido-NAD(+) from nicotinate D-ribonucleotide: step 1/1. Functionally, catalyzes the reversible adenylation of nicotinate mononucleotide (NaMN) to nicotinic acid adenine dinucleotide (NaAD). The sequence is that of Probable nicotinate-nucleotide adenylyltransferase from Chloroherpeton thalassium (strain ATCC 35110 / GB-78).